The primary structure comprises 1349 residues: Nitric oxide synthase (1349 aa).

Positions 23 to 195 (AQQQQQQQQQ…QPRKMSQDYR (173 aa)) are disordered. Composition is skewed to low complexity over residues 24-51 (QQQQQQQQQQLQQQQQQLQQQKAQTQQQ) and 64-73 (LNGNGLLSGN). Gly residues predominate over residues 142-159 (SGSGSGSGGGGVGVGQGA). Positions 165 to 189 (GSCTASGKSSRELSPSPKNQQQPRK) are enriched in polar residues. Ser250 is a binding site for (6R)-L-erythro-5,6,7,8-tetrahydrobiopterin. Cys328 provides a ligand contact to heme b. The L-arginine site is built by Gln391, Trp500, Tyr501, Glu505, and Asn510. (6R)-L-erythro-5,6,7,8-tetrahydrobiopterin is bound by residues Trp591 and Phe604. Tyr619 contacts heme b. The interval 641-661 (PRRKFNFKQIARAVKFTSKLF) is calmodulin-binding. Positions 671–868 (ATVLYATETG…SFRKWAPEVF (198 aa)) constitute a Flavodoxin-like domain. 814-845 (VFALGSSAYPNFCAFGQYVDNILGELGGERLL) is an FMN binding site. One can recognise an FAD-binding FR-type domain in the interval 928–1167 (AKAKPHNLTR…VRSALGFHLP (240 aa)). FAD is bound by residues 957-968 (YEPGDHVGIFPA) and 1100-1110 (LQPRFYSISSS). NADP(+) contacts are provided by residues 1175-1193 (ILIGPGTGIAPFRSFWQEF) and 1273-1287 (GHIYVCGDVTMAEHV).

It belongs to the NOS family. Heme b serves as cofactor. FAD is required as a cofactor. The cofactor is FMN.

It carries out the reaction 2 L-arginine + 3 NADPH + 4 O2 + H(+) = 2 L-citrulline + 2 nitric oxide + 3 NADP(+) + 4 H2O. Its activity is regulated as follows. Stimulated by calcium/calmodulin. In terms of biological role, catalyzes the conversion of L-arginine to L-citrulline producing nitric oxide (NO) which is a messenger molecule with diverse functions throughout the body. Truncated isoforms (isoform 3-isoform 6) are able to form intracellular complexes with the full-length protein and serve as dominant negative inhibitors of the enzyme activity. In Drosophila melanogaster (Fruit fly), this protein is Nitric oxide synthase (Nos).